The sequence spans 147 residues: D-aminoacyl-tRNA deacylase (147 aa).

The Gly-cisPro motif, important for rejection of L-amino acids signature appears at 136 to 137 (GP).

This sequence belongs to the DTD family. Homodimer.

The protein localises to the cytoplasm. The enzyme catalyses glycyl-tRNA(Ala) + H2O = tRNA(Ala) + glycine + H(+). It catalyses the reaction a D-aminoacyl-tRNA + H2O = a tRNA + a D-alpha-amino acid + H(+). In terms of biological role, an aminoacyl-tRNA editing enzyme that deacylates mischarged D-aminoacyl-tRNAs. Also deacylates mischarged glycyl-tRNA(Ala), protecting cells against glycine mischarging by AlaRS. Acts via tRNA-based rather than protein-based catalysis; rejects L-amino acids rather than detecting D-amino acids in the active site. By recycling D-aminoacyl-tRNA to D-amino acids and free tRNA molecules, this enzyme counteracts the toxicity associated with the formation of D-aminoacyl-tRNA entities in vivo and helps enforce protein L-homochirality. This Sulfurihydrogenibium sp. (strain YO3AOP1) protein is D-aminoacyl-tRNA deacylase.